Here is a 184-residue protein sequence, read N- to C-terminus: Probable archaeosortase E (184 aa).

4 consecutive transmembrane segments (helical) span residues 27–47 (ILFLIKFYIIFLVVFFILSYF), 86–106 (VVEECTGSFLIAGLLALIIVY), 114–134 (IIGIFFVLLAFFVNIFRIVLI), and 151–171 (IAGYGVILTLVPVLVIGYLKI). Cys-90 functions as the Acyl-thioester intermediate in the catalytic mechanism. Catalysis depends on Arg-130, which acts as the Proton donor.

This sequence belongs to the exosortase/archaeosortase family. Archaeosortase E subfamily.

It localises to the cell membrane. Functionally, transpeptidase that recognizes and modifies its substrate by proteolytic cleavage of a sorting signal. Following cleavage, a covalent intermediate is formed via a thioester bond between the archaeosortase and its substrate, which is then transferred and covalently attached to the cell membrane. This Methanocaldococcus jannaschii (strain ATCC 43067 / DSM 2661 / JAL-1 / JCM 10045 / NBRC 100440) (Methanococcus jannaschii) protein is Probable archaeosortase E.